Here is a 156-residue protein sequence, read N- to C-terminus: ATP synthase subunit b (156 aa).

Residues 7–27 form a helical membrane-spanning segment; it reads LIGQTIAFIVFVWFCMKFVWP.

This sequence belongs to the ATPase B chain family. In terms of assembly, F-type ATPases have 2 components, F(1) - the catalytic core - and F(0) - the membrane proton channel. F(1) has five subunits: alpha(3), beta(3), gamma(1), delta(1), epsilon(1). F(0) has three main subunits: a(1), b(2) and c(10-14). The alpha and beta chains form an alternating ring which encloses part of the gamma chain. F(1) is attached to F(0) by a central stalk formed by the gamma and epsilon chains, while a peripheral stalk is formed by the delta and b chains.

The protein localises to the cell inner membrane. Its function is as follows. F(1)F(0) ATP synthase produces ATP from ADP in the presence of a proton or sodium gradient. F-type ATPases consist of two structural domains, F(1) containing the extramembraneous catalytic core and F(0) containing the membrane proton channel, linked together by a central stalk and a peripheral stalk. During catalysis, ATP synthesis in the catalytic domain of F(1) is coupled via a rotary mechanism of the central stalk subunits to proton translocation. Component of the F(0) channel, it forms part of the peripheral stalk, linking F(1) to F(0). This Idiomarina loihiensis (strain ATCC BAA-735 / DSM 15497 / L2-TR) protein is ATP synthase subunit b.